A 338-amino-acid polypeptide reads, in one-letter code: MSSLRLLISDSYDPWFNLAVEECIFRQMSPNQRVLFLWRNADTVVIGRAQNPWKECNTRRMEQDGVKLARRSSGGGAVFHDLGNTCFTFMAGKPGYDKTISTQIILNALASLGIQATASGRNDLVVINGEDERKVSGSAYKETKDRGFHHGTLLLNADLSRLADYLNPDPKKLQAKGITSVRSRVTNLVELLPGIDHGKIRTAIEQAFFAYYDEQVSAEVISPQSLPNLPGFTEQFAKQSSWEWNFGQAPAFSHVVDTRFIWGGIELHFDVLHGAIDRCQIFTDSLNPTPLEALAQRLQGAAYRPDAIDKICQHWIDDFPELQTELQQACHWLVEVLR.

The BPL/LPL catalytic domain occupies 29-216; that stretch reads SPNQRVLFLW…AFFAYYDEQV (188 aa). ATP is bound by residues arginine 71, 76-79, and lysine 134; that span reads GAVF. Lysine 134 is a binding site for (R)-lipoate.

It belongs to the LplA family. Monomer.

It localises to the cytoplasm. It carries out the reaction L-lysyl-[lipoyl-carrier protein] + (R)-lipoate + ATP = N(6)-[(R)-lipoyl]-L-lysyl-[lipoyl-carrier protein] + AMP + diphosphate + H(+). Its pathway is protein modification; protein lipoylation via exogenous pathway; protein N(6)-(lipoyl)lysine from lipoate: step 1/2. It participates in protein modification; protein lipoylation via exogenous pathway; protein N(6)-(lipoyl)lysine from lipoate: step 2/2. Functionally, catalyzes both the ATP-dependent activation of exogenously supplied lipoate to lipoyl-AMP and the transfer of the activated lipoyl onto the lipoyl domains of lipoate-dependent enzymes. This chain is Lipoate-protein ligase A, found in Yersinia pseudotuberculosis serotype O:1b (strain IP 31758).